The following is a 358-amino-acid chain: MIGKINKFNFKSLLVLNTFALIATSYLFNNFIFIGVFILFFFLSLFATKNGLEIIRKLNLLQNIRTEGPSNHFQKSNTPTMGGVFLMIPFFILLLIITINLSSLKLFLLLLTIFGFYITGFLDDYLSIKNKENTGLKTKEKFILQSVISIIFILLAYEKNLINPLVILSDSWVINMNIFILPISFLVLVGISNSVNLTDGLDGLAAGCSGIVFYGLGTEILMKEQQELFVFSILCFSMSGLCLGFLKYNSYPAKIFMGDTGSLSIGATLGTIALLTNSVFTLSIFSGIFIIESLSVIIQVGVFKITKKLFHRGKRIFLMAPLHHHFELKGVKEQKIVENFWKINILLIILGIVLKIKL.

Transmembrane regions (helical) follow at residues 27–47 (LFNNFIFIGVFILFFFLSLFA), 81–101 (MGGVFLMIPFFILLLIITINL), 106–126 (LFLLLLTIFGFYITGFLDDYL), 147–167 (VISIIFILLAYEKNLINPLVI), 171–191 (SWVINMNIFILPISFLVLVGI), 201–221 (LDGLAAGCSGIVFYGLGTEIL), 228–248 (LFVFSILCFSMSGLCLGFLKY), 255–275 (IFMGDTGSLSIGATLGTIALL), 278–298 (SVFTLSIFSGIFIIESLSVII), and 336–356 (IVENFWKINILLIILGIVLKI).

The protein belongs to the glycosyltransferase 4 family. MraY subfamily. The cofactor is Mg(2+).

The protein localises to the cell inner membrane. The catalysed reaction is UDP-N-acetyl-alpha-D-muramoyl-L-alanyl-gamma-D-glutamyl-meso-2,6-diaminopimeloyl-D-alanyl-D-alanine + di-trans,octa-cis-undecaprenyl phosphate = di-trans,octa-cis-undecaprenyl diphospho-N-acetyl-alpha-D-muramoyl-L-alanyl-D-glutamyl-meso-2,6-diaminopimeloyl-D-alanyl-D-alanine + UMP. The protein operates within cell wall biogenesis; peptidoglycan biosynthesis. Functionally, catalyzes the initial step of the lipid cycle reactions in the biosynthesis of the cell wall peptidoglycan: transfers peptidoglycan precursor phospho-MurNAc-pentapeptide from UDP-MurNAc-pentapeptide onto the lipid carrier undecaprenyl phosphate, yielding undecaprenyl-pyrophosphoryl-MurNAc-pentapeptide, known as lipid I. In Prochlorococcus marinus (strain MIT 9215), this protein is Phospho-N-acetylmuramoyl-pentapeptide-transferase.